The sequence spans 134 residues: Probable glycine cleavage system H protein (134 aa).

Residues 29–110 enclose the Lipoyl-binding domain; the sequence is TVLVGITDYA…PYGAWIAKIK (82 aa). K70 is subject to N6-lipoyllysine.

It belongs to the GcvH family. The glycine cleavage system is composed of four proteins: P, T, L and H. (R)-lipoate is required as a cofactor.

Functionally, the glycine cleavage system catalyzes the degradation of glycine. The H protein shuttles the methylamine group of glycine from the P protein to the T protein. This chain is Probable glycine cleavage system H protein, found in Pyrococcus horikoshii (strain ATCC 700860 / DSM 12428 / JCM 9974 / NBRC 100139 / OT-3).